Consider the following 968-residue polypeptide: RNA polymerase-associated protein RapA (968 aa).

The Helicase ATP-binding domain occupies 164-334; that stretch reads DVGRRHAPRV…FARLRLLDPN (171 aa). 177-184 contacts ATP; sequence DEVGLGKT. Residues 280–283 carry the DEAH box motif; that stretch reads DEAH. The Helicase C-terminal domain maps to 490 to 662; sequence RVEWLMGYLT…YLASPDQTEG (173 aa).

It belongs to the SNF2/RAD54 helicase family. RapA subfamily. In terms of assembly, interacts with the RNAP. Has a higher affinity for the core RNAP than for the holoenzyme. Its ATPase activity is stimulated by binding to RNAP.

Its function is as follows. Transcription regulator that activates transcription by stimulating RNA polymerase (RNAP) recycling in case of stress conditions such as supercoiled DNA or high salt concentrations. Probably acts by releasing the RNAP, when it is trapped or immobilized on tightly supercoiled DNA. Does not activate transcription on linear DNA. Probably not involved in DNA repair. This chain is RNA polymerase-associated protein RapA, found in Shigella dysenteriae serotype 1 (strain Sd197).